A 288-amino-acid chain; its full sequence is Pyridoxal kinase PdxY (288 aa).

Substrate-binding positions include serine 12 and 47 to 48 (TQ). Residues aspartate 114, glutamate 151, lysine 184, and 211–214 (RPLL) each bind ATP. Aspartate 225 contributes to the substrate binding site.

Belongs to the pyridoxine kinase family. PdxY subfamily. In terms of assembly, homodimer. Requires Mg(2+) as cofactor.

It catalyses the reaction pyridoxal + ATP = pyridoxal 5'-phosphate + ADP + H(+). It participates in cofactor metabolism; pyridoxal 5'-phosphate salvage; pyridoxal 5'-phosphate from pyridoxal: step 1/1. Its function is as follows. Pyridoxal kinase involved in the salvage pathway of pyridoxal 5'-phosphate (PLP). Catalyzes the phosphorylation of pyridoxal to PLP. This is Pyridoxal kinase PdxY from Pseudomonas syringae pv. tomato (strain ATCC BAA-871 / DC3000).